Consider the following 211-residue polypeptide: Large ribosomal subunit protein eL13 (211 aa).

An N6-acetyllysine modification is found at K16. A phosphoserine mark is found at S52, S77, and S106. Glycyl lysine isopeptide (Lys-Gly) (interchain with G-Cter in SUMO2) cross-links involve residues K123 and K145. A Glycyl lysine isopeptide (Lys-Gly) (interchain with G-Cter in SUMO1); alternate cross-link involves residue K174. Residues K174 and K177 each participate in a glycyl lysine isopeptide (Lys-Gly) (interchain with G-Cter in SUMO2); alternate cross-link. At K177 the chain carries N6-acetyllysine; alternate.

Belongs to the eukaryotic ribosomal protein eL13 family. As to quaternary structure, component of the large ribosomal subunit.

It is found in the cytoplasm. Component of the large ribosomal subunit. The ribosome is a large ribonucleoprotein complex responsible for the synthesis of proteins in the cell. The sequence is that of Large ribosomal subunit protein eL13 (Rpl13) from Mus musculus (Mouse).